Reading from the N-terminus, the 359-residue chain is Fe-S cluster assembly protein DRE2 (359 aa).

An N-terminal SAM-like domain region spans residues 1–159 (MANILLLLHP…LFKKLSSNSN (159 aa)). Residues 152–187 (KKLSSNSNNNNNSSSPIGLTDSSAANTDEETDEANV) form a disordered region. Positions 155–166 (SSNSNNNNNSSS) are enriched in low complexity. The interval 159-228 (NNNNNSSSPI…DDLIKDSNQL (70 aa)) is linker. A compositionally biased stretch (polar residues) spans 167 to 177 (PIGLTDSSAAN). The [2Fe-2S] cluster site is built by Cys-240, Cys-252, Cys-255, and Cys-257. The interval 240–257 (CEIPNGKKRRKACKDCTC) is fe-S binding site A. Residues Cys-322, Cys-325, Cys-333, and Cys-336 each coordinate [4Fe-4S] cluster. 2 short sequence motifs (cx2C motif) span residues 322–325 (CGSC) and 333–336 (CDGC). Residues 322–336 (CGSCALGDAFRCDGC) form a fe-S binding site B region.

Belongs to the anamorsin family. In terms of assembly, monomer. Interacts with TAH18. Interacts with MIA40. [2Fe-2S] cluster is required as a cofactor. [4Fe-4S] cluster serves as cofactor.

Its subcellular location is the cytoplasm. It is found in the mitochondrion intermembrane space. Component of the cytosolic iron-sulfur (Fe-S) protein assembly (CIA) machinery required for the maturation of extramitochondrial Fe-S proteins. Part of an electron transfer chain functioning in an early step of cytosolic Fe-S biogenesis, facilitating the de novo assembly of a [4Fe-4S] cluster on the scaffold complex CFD1-NBP35. Electrons are transferred to DRE2 from NADPH via the FAD- and FMN-containing protein TAH18. TAH18-DRE2 are also required for the assembly of the diferric tyrosyl radical cofactor of ribonucleotide reductase (RNR), probably by providing electrons for reduction during radical cofactor maturation in the catalytic small subunit RNR2. The chain is Fe-S cluster assembly protein DRE2 from Scheffersomyces stipitis (strain ATCC 58785 / CBS 6054 / NBRC 10063 / NRRL Y-11545) (Yeast).